A 500-amino-acid chain; its full sequence is Cytochrome P450 2D28 (500 aa).

A heme-binding site is contributed by Cys446.

Belongs to the cytochrome P450 family. The cofactor is heme.

Its subcellular location is the endoplasmic reticulum membrane. It is found in the microsome membrane. The chain is Cytochrome P450 2D28 (CYP2D28A) from Mesocricetus auratus (Golden hamster).